The following is a 557-amino-acid chain: Fatty acyl-CoA hydrolase precursor, medium chain (557 aa).

A signal peptide spans Met1–Gln25. Cys93 and Cys122 are oxidised to a cystine. Ser227 serves as the catalytic Acyl-ester intermediate. Catalysis depends on charge relay system residues Glu345 and His460. Asn476 carries N-linked (GlcNAc...) asparagine glycosylation.

It belongs to the type-B carboxylesterase/lipase family. Highest levels in uropygial gland, much lower in liver and kidney.

Functionally, fatty acid biosynthesis chain termination and release of the free fatty acid product is achieved by hydrolysis of the thio ester by a thioesterase. This thioesterase may be associated with peroxisome proliferation and may play a role in the production of 3-hydroxy fatty acid diester pheromones. This is Fatty acyl-CoA hydrolase precursor, medium chain from Anas platyrhynchos (Mallard).